A 177-amino-acid chain; its full sequence is Co-chaperone protein HscB homolog (177 aa).

Positions 8 to 80 (DYFSLFGMPR…LSRAQYLLEL (73 aa)) constitute a J domain.

It belongs to the HscB family. In terms of assembly, interacts with HscA and stimulates its ATPase activity.

Functionally, co-chaperone involved in the maturation of iron-sulfur cluster-containing proteins. Seems to help targeting proteins to be folded toward HscA. The sequence is that of Co-chaperone protein HscB homolog from Azoarcus sp. (strain BH72).